The chain runs to 179 residues: MEQYHGTTILSVRRGRRVALGGDGQVTLGNVVIKATARKVRPIYQGRILAGFAGGTADAFTLFERFEAKLEKHQGNVLRSAVELAKDWRTDRMLRRLEAMLAVADPDNSLVITGNGDVLEPEQGIVAIGSGGAYAQSAARALLENTALPPEEIVKKSLQIAGDLCIYTNQSHVIEVLEG.

The active site involves threonine 7. Residues glycine 162, cysteine 165, and threonine 168 each coordinate Na(+).

Belongs to the peptidase T1B family. HslV subfamily. In terms of assembly, a double ring-shaped homohexamer of HslV is capped on each side by a ring-shaped HslU homohexamer. The assembly of the HslU/HslV complex is dependent on binding of ATP.

The protein localises to the cytoplasm. The enzyme catalyses ATP-dependent cleavage of peptide bonds with broad specificity.. With respect to regulation, allosterically activated by HslU binding. Protease subunit of a proteasome-like degradation complex believed to be a general protein degrading machinery. This Aromatoleum aromaticum (strain DSM 19018 / LMG 30748 / EbN1) (Azoarcus sp. (strain EbN1)) protein is ATP-dependent protease subunit HslV.